Reading from the N-terminus, the 369-residue chain is 2-aminoethylphosphonate--pyruvate transaminase 1 (369 aa).

An N6-(pyridoxal phosphate)lysine modification is found at lysine 191.

It belongs to the class-V pyridoxal-phosphate-dependent aminotransferase family. PhnW subfamily. Homodimer. The cofactor is pyridoxal 5'-phosphate.

The enzyme catalyses (2-aminoethyl)phosphonate + pyruvate = phosphonoacetaldehyde + L-alanine. Its function is as follows. Involved in phosphonate degradation. The sequence is that of 2-aminoethylphosphonate--pyruvate transaminase 1 from Burkholderia lata (strain ATCC 17760 / DSM 23089 / LMG 22485 / NCIMB 9086 / R18194 / 383).